A 216-amino-acid polypeptide reads, in one-letter code: Probable nicotinate-nucleotide adenylyltransferase (216 aa).

It belongs to the NadD family.

It catalyses the reaction nicotinate beta-D-ribonucleotide + ATP + H(+) = deamido-NAD(+) + diphosphate. It functions in the pathway cofactor biosynthesis; NAD(+) biosynthesis; deamido-NAD(+) from nicotinate D-ribonucleotide: step 1/1. Its function is as follows. Catalyzes the reversible adenylation of nicotinate mononucleotide (NaMN) to nicotinic acid adenine dinucleotide (NaAD). The chain is Probable nicotinate-nucleotide adenylyltransferase from Shewanella baltica (strain OS185).